Reading from the N-terminus, the 246-residue chain is Eukaryotic translation initiation factor 6 (246 aa).

Belongs to the eIF-6 family. Monomer. Associates with the 60S ribosomal subunit.

The protein resides in the cytoplasm. It localises to the nucleus. The protein localises to the nucleolus. In terms of biological role, binds to the 60S ribosomal subunit and prevents its association with the 40S ribosomal subunit to form the 80S initiation complex in the cytoplasm. May also be involved in ribosome biogenesis. Involved in miRNA-mediated gene silencing. This is Eukaryotic translation initiation factor 6 from Caenorhabditis elegans.